Reading from the N-terminus, the 1529-residue chain is ATP-dependent permease PDR15 (1529 aa).

The span at 1-13 shows a compositional bias: basic and acidic residues; sequence MSSDIRDVEERNS. Positions 1–38 are disordered; that stretch reads MSSDIRDVEERNSRSSSSSSSSNSAAQSIGQHPYRGFD. Topologically, residues 1-531 are cytoplasmic; it reads MSSDIRDVEE…NFWRMKQSAS (531 aa). The span at 14–24 shows a compositional bias: low complexity; the sequence is RSSSSSSSSNS. The ABC transporter 1 domain maps to 171-420; sequence LRLLKPSKEE…FQDMGYYCPP (250 aa). The helical transmembrane segment at 532 to 552 threads the bilayer; sequence VTLWQVIGNSVMAFILGSMFY. The Extracellular segment spans residues 553–567; it reads KVMKKNDTSTFYFRG. Asn-558 is a glycosylation site (N-linked (GlcNAc...) asparagine). A helical membrane pass occupies residues 568 to 588; the sequence is AAMFFAILFNAFSCLLEIFSL. Residues 589–617 are Cytoplasmic-facing; that stretch reads YETRPITEKHRTYSLYHPSADAFASVLSE. A helical transmembrane segment spans residues 618–638; it reads MPPKLITAVCFNIIFYFLVDF. The Extracellular segment spans residues 639–642; sequence RRNG. Residues 643-663 form a helical membrane-spanning segment; the sequence is GVFFFYFLINVIATFTLSHLF. The Cytoplasmic segment spans residues 664-699; that stretch reads RCVGSLTKTLQEAMVPASMLLLAISMYTGFAIPKTK. A helical transmembrane segment spans residues 700-720; it reads ILGWSIWIWYINPLAYLFESL. Topologically, residues 721 to 783 are extracellular; the sequence is MINEFHDRRF…YDYEHKHKWR (63 aa). The N-linked (GlcNAc...) asparagine glycan is linked to Asn-744. A helical membrane pass occupies residues 784–804; the sequence is GFGIGMAYVVFFFFVYLILCE. Residues 805–1219 are Cytoplasmic-facing; sequence YNEGAKQKGE…LFQQYWRSPD (415 aa). Basic and acidic residues predominate over residues 829 to 840; it reads EGKLQEKHRPGD. Residues 829–873 are disordered; that stretch reads EGKLQEKHRPGDIENNAGSSPDSATTEKKILDDSSEGSDSSSDNA. In terms of domain architecture, ABC transporter 2 spans 884–1127; the sequence is FHWRDLCYDV…MIDYFESKGA (244 aa). Position 920–927 (920–927) interacts with ATP; it reads GASGAGKT. A helical transmembrane segment spans residues 1220–1240; it reads YLWSKFILTIFNQVFIGFTFF. Residues 1241–1312 are Extracellular-facing; the sequence is KADRSLQGLQ…VEIPWNILAG (72 aa). The chain crosses the membrane as a helical span at residues 1313–1333; it reads TIAYCIYYYAVGFYANASAAG. At 1334–1340 the chain is on the cytoplasmic side; it reads QLHERGA. The chain crosses the membrane as a helical span at residues 1341–1361; the sequence is LFWLFSIAFYVYIGSMGLLMI. The Extracellular portion of the chain corresponds to 1362–1368; it reads SFNEVAE. The helical transmembrane segment at 1369-1389 threads the bilayer; it reads TAAHMGTLLFTMALSFCGVMA. At 1390–1396 the chain is on the cytoplasmic side; sequence TPKVMPR. Residues 1397 to 1417 form a helical membrane-spanning segment; that stretch reads FWIFMYRVSPLTYMIDALLAL. Topologically, residues 1418 to 1492 are extracellular; that stretch reads GVANVDVKCS…SSHYYRRWRN (75 aa). A helical membrane pass occupies residues 1493-1513; it reads YGIFICYIAFDYIAATFLYWL. Topologically, residues 1514–1529 are cytoplasmic; the sequence is SRVPKKNGKISEKPKK.

The protein belongs to the ABC transporter superfamily. ABCG family. PDR (TC 3.A.1.205) subfamily.

Its subcellular location is the membrane. The polypeptide is ATP-dependent permease PDR15 (PDR15) (Saccharomyces cerevisiae (strain ATCC 204508 / S288c) (Baker's yeast)).